The primary structure comprises 297 residues: Endonuclease G, mitochondrial (297 aa).

A mitochondrion-targeting transit peptide spans Met-1–Ala-48. Position 128 is a phosphothreonine; by GSK3-beta (Thr-128). Residue His-141 is the Proton acceptor of the active site. Mg(2+) is bound at residue Asn-172. The essential for deoxyribonuclease activity stretch occupies residues Ala-286–Ser-296. The residue at position 288 (Ser-288) is a Phosphoserine; by GSK3-beta.

The protein belongs to the DNA/RNA non-specific endonuclease family. In terms of assembly, homodimer; disulfide-linked. Homodimerization is essential for enzyme activity. Interacts with YWHAG. It depends on Mg(2+) as a cofactor. Post-translationally, GSK3-beta-mediated dual phosphorylations at Thr-128 and Ser-288 is necessary for its interaction with YWHAG and the induction of autophagy.

It is found in the mitochondrion. Functionally, endonuclease that preferentially catalyzes the cleavage of double-stranded 5-hydroxymethylcytosine (5hmC)-modified DNA. The 5hmC-modified nucleotide does not increase the binding affinity, but instead increases the efficiency of cutting and specifies the site of cleavage for the modified DNAs. Shows significantly higher affinity for four-stranded Holliday junction over duplex and single-stranded DNAs. Promotes conservative recombination when the DNA is 5hmC-modified. Promotes autophagy through the suppression of mTOR by its phosphorylation-mediated interaction with YWHAG and its endonuclease activity-mediated DNA damage response. GSK3-beta mediated phosphorylation of ENDOG enhances its interaction with YWHAG, leading to the release of TSC2 and PIK3C3 from YWHAG resulting in mTOR pathway suppression and autophagy initiation. Promotes cleavage of mtDNA in response to oxidative and nitrosative stress, in turn inducing compensatory mtDNA replication. The protein is Endonuclease G, mitochondrial (ENDOG) of Homo sapiens (Human).